The sequence spans 222 residues: V-type ATP synthase subunit D (222 aa).

It belongs to the V-ATPase D subunit family.

Produces ATP from ADP in the presence of a proton gradient across the membrane. The sequence is that of V-type ATP synthase subunit D from Deinococcus geothermalis (strain DSM 11300 / CIP 105573 / AG-3a).